Here is a 213-residue protein sequence, read N- to C-terminus: HTH-type transcriptional regulator SrpR (213 aa).

Residues 10 to 70 (EETRQRIIDA…AVLASRQHPL (61 aa)) enclose the HTH tetR-type domain. A DNA-binding region (H-T-H motif) is located at residues 33 to 52 (TLDQIARKAGVTRGAVYWHF).

In terms of biological role, in conjunction with SrpS represses the srpABC operon. This is HTH-type transcriptional regulator SrpR (srpR) from Pseudomonas putida (Arthrobacter siderocapsulatus).